The primary structure comprises 572 residues: Urease subunit alpha (572 aa).

The region spanning 134-572 (GGIDAHVHFI…LPMAQRYFLF (439 aa)) is the Urease domain. Ni(2+) is bound by residues His-139, His-141, and Lys-222. Lys-222 carries the post-translational modification N6-carboxylysine. His-224 contributes to the substrate binding site. Ni(2+) contacts are provided by His-251 and His-277. Catalysis depends on His-325, which acts as the Proton donor. Residue Asp-365 coordinates Ni(2+).

The protein belongs to the metallo-dependent hydrolases superfamily. Urease alpha subunit family. In terms of assembly, heterotrimer of UreA (gamma), UreB (beta) and UreC (alpha) subunits. Three heterotrimers associate to form the active enzyme. Ni cation serves as cofactor. Carboxylation allows a single lysine to coordinate two nickel ions.

It is found in the cytoplasm. The enzyme catalyses urea + 2 H2O + H(+) = hydrogencarbonate + 2 NH4(+). It participates in nitrogen metabolism; urea degradation; CO(2) and NH(3) from urea (urease route): step 1/1. The chain is Urease subunit alpha from Synechococcus sp. (strain JA-2-3B'a(2-13)) (Cyanobacteria bacterium Yellowstone B-Prime).